A 275-amino-acid chain; its full sequence is Nitrogenase iron protein 2 (275 aa).

9-16 (GKGGIGKS) provides a ligand contact to ATP. A [4Fe-4S] cluster-binding site is contributed by Cys-97. Arg-100 bears the ADP-ribosylarginine; by dinitrogenase reductase ADP-ribosyltransferase mark. Position 132 (Cys-132) interacts with [4Fe-4S] cluster.

Belongs to the NifH/BchL/ChlL family. Homodimer. It depends on [4Fe-4S] cluster as a cofactor. In terms of processing, the reversible ADP-ribosylation of Arg-100 inactivates the nitrogenase reductase and regulates nitrogenase activity.

The enzyme catalyses N2 + 8 reduced [2Fe-2S]-[ferredoxin] + 16 ATP + 16 H2O = H2 + 8 oxidized [2Fe-2S]-[ferredoxin] + 2 NH4(+) + 16 ADP + 16 phosphate + 6 H(+). Functionally, the key enzymatic reactions in nitrogen fixation are catalyzed by the nitrogenase complex, which has 2 components: the iron protein (component 2) and a component 1 which is either a molybdenum-iron protein, a vanadium-iron, or an iron-iron protein. The protein is Nitrogenase iron protein 2 (anfH) of Rhodobacter capsulatus (Rhodopseudomonas capsulata).